We begin with the raw amino-acid sequence, 1037 residues long: Multidrug resistance protein MdtF (1037 aa).

The Cytoplasmic portion of the chain corresponds to 1-9 (MANYFIDRP). A helical membrane pass occupies residues 10–30 (VFAWVLAIIMMLAGGLAIMNL). The Periplasmic portion of the chain corresponds to 31–338 (PVAQYPQIAP…TTPFIKISIQ (308 aa)). A helical transmembrane segment spans residues 339–359 (EVFKTLVEAIILVFLVMYLFL). Residues 360–369 (QNFRATIIPT) are Cytoplasmic-facing. The chain crosses the membrane as a helical span at residues 370–390 (IAVPVVILGTFAILSAVGFTI). The Periplasmic portion of the chain corresponds to 391–392 (NT). The helical transmembrane segment at 393-413 (LTMFGMVLAIGLLVDDAIVVV) threads the bilayer. Residues 414–440 (ENVERVIAEDKLPPKEATHKSMGQIQR) lie on the Cytoplasmic side of the membrane. The helical transmembrane segment at 441 to 461 (ALVGIAVVLSAVFMPMAFMSG) threads the bilayer. At 462 to 471 (ATGEIYRQFS) the chain is on the periplasmic side. A helical transmembrane segment spans residues 472 to 492 (ITLISSMLLSVFVAMSLTPAL). The Cytoplasmic portion of the chain corresponds to 493-534 (CATILKAAPEGGHKPNALFARFNTLFEKSTQHYTDSTRSLLR). A helical membrane pass occupies residues 535 to 555 (CTGRYMVVYLLICAGMAVLFL). Over 556 to 870 (RTPTSFLPEE…SYQEALSSNQ (315 aa)) the chain is Periplasmic. A helical transmembrane segment spans residues 871–891 (APALYAISLVVVFLALAALYE). Ser892 is a topological domain (cytoplasmic). Residues 893-913 (WSIPFSVMLVVPLGVVGALLA) traverse the membrane as a helical segment. The Periplasmic portion of the chain corresponds to 914 to 927 (TDLRGLSNDVYFQV). A helical membrane pass occupies residues 928 to 948 (GLLTTIGLSAKNAILIVEFAV). Residues 949 to 972 (EMMQKEGKTPVEAIIEAARMRLRP) are Cytoplasmic-facing. The chain crosses the membrane as a helical span at residues 973 to 993 (ILMTSLAFILGVLPLVISHGA). Topologically, residues 994-1006 (GSGAQNAVGTGVM) are periplasmic. The chain crosses the membrane as a helical span at residues 1007-1027 (GGMFAATVLAIYFVPVFFVVV). The Cytoplasmic portion of the chain corresponds to 1028–1037 (EHLFARFKKA).

It belongs to the resistance-nodulation-cell division (RND) (TC 2.A.6) family. In terms of assembly, homotrimer. Part of the tripartite efflux system MdtEF-TolC, which is composed of an inner membrane transporter, MdtF, a membrane fusion protein, MdtE, and an outer membrane component, TolC. The complex forms a large protein conduit and can translocate molecules across both the inner and outer membranes.

The protein resides in the cell inner membrane. Functionally, part of the tripartite efflux system MdtEF-TolC, which confers resistance to various compounds. The polypeptide is Multidrug resistance protein MdtF (mdtF) (Escherichia coli O6:H1 (strain CFT073 / ATCC 700928 / UPEC)).